A 374-amino-acid chain; its full sequence is MTENINEFRVNNFGAGPGCIPTEVLLEAQKELLNFQGCGKSIMEVSHRGKEFEGVINETKSNLKKLLSISDDYDILFLQGGASSLFAGIPMNLCENGVEDIVDFIVTGSWSKQASNDGKYFCKVNKVVDMEKEKFLTVTEPQSWKFSPDAKYVHYCDNETIHGIEMPISTPDHLPSNLIKVCDMSSNFLSKPIDVNKFDLIFAGAQKNAGISGITIVIIKKSLLLKTKPNVPSVFNFLKKSQNNSLDNTPPTFNIYITGLILKWIINKGGLSEIEKLNIAKAHALYEYIDNSNSFYKCSIDKNYRSRMNVVFRIQDGNTELEEKFIKEASKENITDIKGHRSVGGLRVSLYNAITIDQTLILINFMTNFHNNNK.

R48 is a binding site for L-glutamate. Pyridoxal 5'-phosphate contacts are provided by residues A82–S83, W110, T160, D183, and Q206. Residue K207 is modified to N6-(pyridoxal phosphate)lysine. N248–T249 serves as a coordination point for pyridoxal 5'-phosphate.

Belongs to the class-V pyridoxal-phosphate-dependent aminotransferase family. SerC subfamily. Homodimer. It depends on pyridoxal 5'-phosphate as a cofactor.

It carries out the reaction O-phospho-L-serine + 2-oxoglutarate = 3-phosphooxypyruvate + L-glutamate. The catalysed reaction is 4-(phosphooxy)-L-threonine + 2-oxoglutarate = (R)-3-hydroxy-2-oxo-4-phosphooxybutanoate + L-glutamate. Its pathway is amino-acid biosynthesis; L-serine biosynthesis; L-serine from 3-phospho-D-glycerate: step 2/3. The protein operates within cofactor biosynthesis; pyridoxine 5'-phosphate biosynthesis; pyridoxine 5'-phosphate from D-erythrose 4-phosphate: step 3/5. Its function is as follows. Catalyzes the reversible conversion of 3-phosphohydroxypyruvate to phosphoserine and of 3-hydroxy-2-oxo-4-phosphonooxybutanoate to phosphohydroxythreonine. This chain is Probable phosphoserine aminotransferase (serC), found in Dictyostelium discoideum (Social amoeba).